Here is a 130-residue protein sequence, read N- to C-terminus: UPF0212 protein PF1486 (130 aa).

This sequence belongs to the UPF0212 family.

The sequence is that of UPF0212 protein PF1486 from Pyrococcus furiosus (strain ATCC 43587 / DSM 3638 / JCM 8422 / Vc1).